We begin with the raw amino-acid sequence, 234 residues long: BTB/POZ domain-containing protein KCTD5 (234 aa).

Residue alanine 2 is modified to N-acetylalanine. One can recognise a BTB domain in the interval lysine 44–aspartate 146. Positions proline 213–methionine 234 are disordered. Residues proline 220–methionine 234 are compositionally biased toward basic and acidic residues.

Homopentamer. Interacts (via C-terminus) with GRASP55/GORASP2. Interacts with CUL3 and with ubiquitinated proteins. Interacts with CRY1.

It is found in the cytoplasm. The protein resides in the cytosol. It localises to the nucleus. In terms of biological role, its interaction with CUL3 suggests that it may act as a substrate adapter in some E3 ligase complex. Does not affect the function of Kv channel Kv2.1/KCNB1, Kv1.2/KCNA2, Kv4.2/KCND2 and Kv3.4/KCNC4. The protein is BTB/POZ domain-containing protein KCTD5 (Kctd5) of Rattus norvegicus (Rat).